A 131-amino-acid chain; its full sequence is Profilin-3 (131 aa).

A disulfide bond links C13 and C115. The Involved in PIP2 interaction motif lies at 81–97 (AVIRGKKGSGGITIKKT). T111 carries the post-translational modification Phosphothreonine.

It belongs to the profilin family. As to quaternary structure, occurs in many kinds of cells as a complex with monomeric actin in a 1:1 ratio. In terms of processing, phosphorylated by MAP kinases.

Its subcellular location is the cytoplasm. It localises to the cytoskeleton. Functionally, binds to actin and affects the structure of the cytoskeleton. At high concentrations, profilin prevents the polymerization of actin, whereas it enhances it at low concentrations. This is Profilin-3 from Olea europaea (Common olive).